The following is a 380-amino-acid chain: Crotonobetainyl-CoA reductase (380 aa).

Belongs to the acyl-CoA dehydrogenase family. Homotetramer. FAD serves as cofactor.

The protein resides in the cytoplasm. The enzyme catalyses 4-(trimethylamino)butanoyl-CoA + oxidized [electron-transfer flavoprotein] + H(+) = crotonobetainyl-CoA + reduced [electron-transfer flavoprotein]. Its pathway is amine and polyamine metabolism; carnitine metabolism. In terms of biological role, catalyzes the reduction of crotonobetainyl-CoA to gamma-butyrobetainyl-CoA. The chain is Crotonobetainyl-CoA reductase from Proteus sp. (strain LE138).